A 215-amino-acid polypeptide reads, in one-letter code: Large ribosomal subunit protein uL3 (215 aa).

N5-methylglutamine is present on Q156.

This sequence belongs to the universal ribosomal protein uL3 family. In terms of assembly, part of the 50S ribosomal subunit. Forms a cluster with proteins L14 and L19. Methylated by PrmB.

One of the primary rRNA binding proteins, it binds directly near the 3'-end of the 23S rRNA, where it nucleates assembly of the 50S subunit. The protein is Large ribosomal subunit protein uL3 of Xylella fastidiosa (strain M23).